We begin with the raw amino-acid sequence, 807 residues long: Histone transcription regulator slm9 (807 aa).

WD repeat units lie at residues 62–100 (SFDS…KAFQ) and 102–140 (LSGP…ETIV). Residues 144–164 (EHADSNHQPAVSIEESKEAVE) are disordered. WD repeat units lie at residues 182 to 221 (GHHT…VEKS), 230 to 273 (PTGN…YDIN), 276 to 322 (GHQG…PMAV), and 326 to 367 (LSCS…EKMD). A disordered region spans residues 388 to 437 (NKNAAADRTTSPTQGQPESPSKSILLRPPPSIASSPESKRRKCPKKFVAR). Residues 395–409 (RTTSPTQGQPESPSK) are compositionally biased toward polar residues. Phosphoserine is present on residues Ser406, Ser421, and Ser422. Positions 426 to 435 (KRRKCPKKFV) are enriched in basic residues. 2 WD repeats span residues 492–526 (DCSW…YIYS) and 528–574 (AGRL…AIHS).

The protein belongs to the WD repeat HIR1 family. Interacts with hip1 and hip3.

It is found in the cytoplasm. The protein localises to the nucleus. In terms of biological role, probably required for replication-independent chromatin assembly. Required for transcriptional silencing in the outer repeat (otr) centromeric repeats and the Tf2 long terminal repeat retrotransposons. May play an indirect role in the regulation of cdc2 and/or wee1 at the G2/M stage of mitosis. This Schizosaccharomyces pombe (strain 972 / ATCC 24843) (Fission yeast) protein is Histone transcription regulator slm9 (slm9).